The chain runs to 473 residues: MALRHTISPQFSNRHSPPVTRSVSRTGVHQPLDTSTPVTRRDSQPGTITGTIQRFHESADDSEIDLNSSKFIYKEHFSYKEITSMKKEMWYDWLEYRIRMVRRRFVPTWAQFKRTLMAVVLFAMLYKYARDCLFDGTHHNSEGSYADKDANWASEKQKFHQTISNLRAEFSAHDKQLDFKTDHLEKLLENVLEHSKGWKESAIEELKQIKLWQAEISDALQQMKKEIDDAKSTKIIHSTPEKAPETAPTASLPPSSQLQPMHITRRALLGVNVANSLIGASIDHSCSSRPVSAKDGFFYDFMSYFGTFQEGYALLDRDVLSPGEAWCTYDKRATLTVKLARFVIPKSVSYQHVRWSGIVPNHAPKLYDVVACTDSCCTKWQPLVANCEYKERDGSYDEQEQFCSVPTIQNHSPINHVQFRFRENHGDMPKTCAYLIRVYGEPVDPPKETQPMTDNGTESKLESAIVNSVSETA.

A disordered region spans residues 1–47; it reads MALRHTISPQFSNRHSPPVTRSVSRTGVHQPLDTSTPVTRRDSQPGT. A compositionally biased stretch (polar residues) spans 7-47; the sequence is ISPQFSNRHSPPVTRSVSRTGVHQPLDTSTPVTRRDSQPGT. Coiled-coil stretches lie at residues 163–191 and 204–235; these read ISNLRAEFSAHDKQLDFKTDHLEKLLENV and EELKQIKLWQAEISDALQQMKKEIDDAKSTKI. A disordered region spans residues 237–257; it reads HSTPEKAPETAPTASLPPSSQ. Positions 248–257 are enriched in polar residues; sequence PTASLPPSSQ. A helical membrane pass occupies residues 262–282; it reads HITRRALLGVNVANSLIGASI. An SUN domain is found at 279-443; the sequence is GASIDHSCSS…YLIRVYGEPV (165 aa). The interval 443-473 is disordered; that stretch reads VDPPKETQPMTDNGTESKLESAIVNSVSETA.

It localises to the nucleus membrane. The protein localises to the nucleus envelope. In terms of biological role, involved in centrosome attachment to the nucleus. Required for zyg-12 localization to the nuclear envelope. Together with pot-1, it is required to anchor telomeres to the nuclear envelope in embryos. The sequence is that of Sun domain-containing protein 1 from Caenorhabditis elegans.